A 369-amino-acid polypeptide reads, in one-letter code: Transmembrane protein 198 (369 aa).

7 helical membrane-spanning segments follow: residues 37–57, 60–80, 93–113, 117–137, 148–168, 181–201, and 216–236; these read VVPS…CFFG, CFKA…IFLL, VEAS…VTML, VGLF…TLIG, SVWV…VLTL, VFGA…FALV, and VCWT…LGVL. Residues 266-308 form a disordered region; sequence RQKEERRESSRKKKRKQPQSAQHTHAAKALHPEPAYRRKPNPI.

The protein belongs to the TMEM198 family.

It localises to the membrane. The polypeptide is Transmembrane protein 198 (tmem198ab) (Danio rerio (Zebrafish)).